Consider the following 532-residue polypeptide: BEL1-like homeodomain protein 6 (532 aa).

An SR/KY domain region spans residues 144–160 (SKYLKAAQQLLDEAVNV). A disordered region spans residues 170–203 (EGDKNNENPQEPNQSTQDSSTNPPADISQSERQE). Positions 176-197 (ENPQEPNQSTQDSSTNPPADIS) are enriched in polar residues. Residues 200 to 271 (ERQEMQSKLT…SLRDAISGQI (72 aa)) form a BELL domain region. Positions 314-376 (AWRPQRGLPE…NARVRLWKPM (63 aa)) form a DNA-binding region, homeobox. The disordered stretch occupies residues 385-434 (FTENDSNSSSENTPKMSEIGPVAADDEDRAREFSQDQTKPDHGHGYGEET). Residues 412–434 (DRAREFSQDQTKPDHGHGYGEET) are compositionally biased toward basic and acidic residues.

It belongs to the TALE/BELL homeobox family. In terms of assembly, may form heterodimeric complexes with TALE/KNOX proteins. Interacts with OFP2, OFP4, and OFP5.

It localises to the nucleus. This is BEL1-like homeodomain protein 6 (BLH6) from Arabidopsis thaliana (Mouse-ear cress).